The chain runs to 1343 residues: DNA-directed RNA polymerase subunit beta (1343 aa).

This sequence belongs to the RNA polymerase beta chain family. As to quaternary structure, the RNAP catalytic core consists of 2 alpha, 1 beta, 1 beta' and 1 omega subunit. When a sigma factor is associated with the core the holoenzyme is formed, which can initiate transcription.

The enzyme catalyses RNA(n) + a ribonucleoside 5'-triphosphate = RNA(n+1) + diphosphate. Functionally, DNA-dependent RNA polymerase catalyzes the transcription of DNA into RNA using the four ribonucleoside triphosphates as substrates. The chain is DNA-directed RNA polymerase subunit beta from Shewanella pealeana (strain ATCC 700345 / ANG-SQ1).